The sequence spans 146 residues: MTIKLHHLRPAPGSKTERTRVGRGEGSKGKTAGRGTKGTKARKNVPVTFEGGQMPIHMRLPKLKGFKNRFRTEYQVVNVADIERLFPEGGDVTIEALVAKGAVRKNELVKVLGNGDLKVKVSVSANKFSDSAREKITAAGGSINEV.

A disordered region spans residues 1-45; it reads MTIKLHHLRPAPGSKTERTRVGRGEGSKGKTAGRGTKGTKARKNV. A compositionally biased stretch (basic and acidic residues) spans 15–28; that stretch reads KTERTRVGRGEGSK.

It belongs to the universal ribosomal protein uL15 family. Part of the 50S ribosomal subunit.

Its function is as follows. Binds to the 23S rRNA. This chain is Large ribosomal subunit protein uL15, found in Mycobacteroides abscessus (strain ATCC 19977 / DSM 44196 / CCUG 20993 / CIP 104536 / JCM 13569 / NCTC 13031 / TMC 1543 / L948) (Mycobacterium abscessus).